The chain runs to 118 residues: Ribonuclease P protein component (118 aa).

The protein belongs to the RnpA family. As to quaternary structure, consists of a catalytic RNA component (M1 or rnpB) and a protein subunit.

It carries out the reaction Endonucleolytic cleavage of RNA, removing 5'-extranucleotides from tRNA precursor.. RNaseP catalyzes the removal of the 5'-leader sequence from pre-tRNA to produce the mature 5'-terminus. It can also cleave other RNA substrates such as 4.5S RNA. The protein component plays an auxiliary but essential role in vivo by binding to the 5'-leader sequence and broadening the substrate specificity of the ribozyme. The polypeptide is Ribonuclease P protein component (Rickettsia akari (strain Hartford)).